A 118-amino-acid chain; its full sequence is Putative pterin-4-alpha-carbinolamine dehydratase (118 aa).

Belongs to the pterin-4-alpha-carbinolamine dehydratase family.

It catalyses the reaction (4aS,6R)-4a-hydroxy-L-erythro-5,6,7,8-tetrahydrobiopterin = (6R)-L-erythro-6,7-dihydrobiopterin + H2O. The chain is Putative pterin-4-alpha-carbinolamine dehydratase from Xanthomonas euvesicatoria pv. vesicatoria (strain 85-10) (Xanthomonas campestris pv. vesicatoria).